Reading from the N-terminus, the 152-residue chain is TOMM20-like protein 1 (152 aa).

Over 1-9 (MPSVRSLLR) the chain is Mitochondrial intermembrane. The helical transmembrane segment at 10-29 (LLAAAAACGAFAFLGYCIYL) threads the bilayer. Residues 30 to 152 (NRKRRGDPAF…EQDCLEDDPD (123 aa)) are Cytoplasmic-facing. The disordered stretch occupies residues 43–62 (LRDKRRAEPQKAEEQGTQLW). The segment covering 47-56 (RRAEPQKAEE) has biased composition (basic and acidic residues).

This sequence belongs to the Tom20 family.

The protein localises to the mitochondrion outer membrane. The polypeptide is TOMM20-like protein 1 (TOMM20L) (Homo sapiens (Human)).